A 311-amino-acid chain; its full sequence is tRNA dimethylallyltransferase (311 aa).

An ATP-binding site is contributed by 12 to 19; it reads GPTASGKT. 14-19 is a binding site for substrate; sequence TASGKT. Interaction with substrate tRNA regions lie at residues 37-40 and 161-165; these read DSAM and QRIQR.

This sequence belongs to the IPP transferase family. In terms of assembly, monomer. Mg(2+) serves as cofactor.

It carries out the reaction adenosine(37) in tRNA + dimethylallyl diphosphate = N(6)-dimethylallyladenosine(37) in tRNA + diphosphate. Its function is as follows. Catalyzes the transfer of a dimethylallyl group onto the adenine at position 37 in tRNAs that read codons beginning with uridine, leading to the formation of N6-(dimethylallyl)adenosine (i(6)A). This Coxiella burnetii (strain Dugway 5J108-111) protein is tRNA dimethylallyltransferase.